An 83-amino-acid chain; its full sequence is NAD(P)H-quinone oxidoreductase subunit L (83 aa).

Transmembrane regions (helical) follow at residues 18–38 (ILAY…ALFF) and 53–73 (LLVY…APFL).

It belongs to the complex I NdhL subunit family. As to quaternary structure, NDH-1 can be composed of about 15 different subunits; different subcomplexes with different compositions have been identified which probably have different functions.

Its subcellular location is the cellular thylakoid membrane. The catalysed reaction is a plastoquinone + NADH + (n+1) H(+)(in) = a plastoquinol + NAD(+) + n H(+)(out). It catalyses the reaction a plastoquinone + NADPH + (n+1) H(+)(in) = a plastoquinol + NADP(+) + n H(+)(out). NDH-1 shuttles electrons from an unknown electron donor, via FMN and iron-sulfur (Fe-S) centers, to quinones in the respiratory and/or the photosynthetic chain. The immediate electron acceptor for the enzyme in this species is believed to be plastoquinone. Couples the redox reaction to proton translocation, and thus conserves the redox energy in a proton gradient. Cyanobacterial NDH-1 also plays a role in inorganic carbon-concentration. The sequence is that of NAD(P)H-quinone oxidoreductase subunit L from Parasynechococcus marenigrum (strain WH8102).